The following is a 1082-amino-acid chain: Importin-4 (1082 aa).

Residue Met-1 is modified to N-acetylmethionine. The 67-residue stretch at 24 to 90 (ATEQLQTILR…KSLVLTALQK (67 aa)) folds into the Importin N-terminal domain. 6 HEAT repeats span residues 348–385 (KLCP…GAGD), 390–427 (RLLY…NLQP), 431–471 (SYSE…NLGP), 475–513 (PYLP…AAQD), 896–933 (QFVS…HGGC), and 937–975 (DHFP…ASPV).

This sequence belongs to the importin beta family. As to quaternary structure, found in a cytosolic complex with ASF1 (ASF1A or ASF1B) and histones H3 and H4.

It is found in the cytoplasm. The protein resides in the nucleus. Nuclear transport receptor that mediates nuclear import of proteins, such as histones, RPS3A, TNP2 and VDR. Serves as receptor for nuclear localization signals (NLS) in cargo substrates. Is thought to mediate docking of the importin/substrate complex to the nuclear pore complex (NPC) through binding to nucleoporin and the complex is subsequently translocated through the pore by an energy requiring, Ran-dependent mechanism. At the nucleoplasmic side of the NPC, Ran binds to the importin, the importin/substrate complex dissociates and importin is re-exported from the nucleus to the cytoplasm where GTP hydrolysis releases Ran. The directionality of nuclear import is thought to be conferred by an asymmetric distribution of the GTP- and GDP-bound forms of Ran between the cytoplasm and nucleus. Mediates the nuclear import of the histone H3-H4 dimer when in complex with ASF1 (ASF1A or ASF1B). Mediates the ligand-independent nuclear import of vitamin D receptor (VDR). This chain is Importin-4 (Ipo4), found in Mus musculus (Mouse).